A 200-amino-acid chain; its full sequence is Nitrile hydratase subunit alpha (200 aa).

Fe(3+) is bound by residues C105, C108, S109, and C110. Residue C108 is modified to Cysteine sulfinic acid (-SO2H). C110 bears the Cysteine sulfenic acid (-SOH) mark.

This sequence belongs to the nitrile hydratase subunit alpha family. Heterodimer of an alpha and a beta chain. Fe(3+) serves as cofactor. Post-translationally, oxidation on Cys-108 is essential for the activity. In terms of processing, oxidation on Cys-110 stabilizes the Fe-NO ligand coordinated in the inactive form.

The enzyme catalyses an aliphatic primary amide = an aliphatic nitrile + H2O. Its activity is regulated as follows. Inactivated by oxidation of Cys-110 to a sulfenic acid. Functionally, NHase catalyzes the hydration of various nitrile compounds to the corresponding amides. Industrial production of acrylamide is now being developed using some of the enzymes of this class. In Pseudomonas chlororaphis (Pseudomonas aureofaciens), this protein is Nitrile hydratase subunit alpha (nthA).